Reading from the N-terminus, the 546-residue chain is Probable sucrose-6-phosphate hydrolase (546 aa).

Substrate is bound by residues 105-108, glutamine 124, 167-168, 228-229, and glutamate 283; these read LLND, FS, and RD. The active site involves aspartate 108.

The protein belongs to the glycosyl hydrolase 32 family.

The protein resides in the cytoplasm. It carries out the reaction Hydrolysis of terminal non-reducing beta-D-fructofuranoside residues in beta-D-fructofuranosides.. It participates in glycan biosynthesis; sucrose metabolism. Functionally, enables the bacterium to metabolize sucrose as a sole carbon source. The sequence is that of Probable sucrose-6-phosphate hydrolase from Vibrio cholerae.